A 278-amino-acid polypeptide reads, in one-letter code: Elongation factor Ts (278 aa).

Positions 82 to 85 are involved in Mg(2+) ion dislocation from EF-Tu; sequence TDFV.

This sequence belongs to the EF-Ts family.

It localises to the cytoplasm. In terms of biological role, associates with the EF-Tu.GDP complex and induces the exchange of GDP to GTP. It remains bound to the aminoacyl-tRNA.EF-Tu.GTP complex up to the GTP hydrolysis stage on the ribosome. The chain is Elongation factor Ts (tsf) from Streptomyces ramocissimus.